Here is a 577-residue protein sequence, read N- to C-terminus: Arginine--tRNA ligase (577 aa).

Positions 122–132 match the 'HIGH' region motif; sequence PNVAKEMHVGH.

The protein belongs to the class-I aminoacyl-tRNA synthetase family. In terms of assembly, monomer.

The protein localises to the cytoplasm. The enzyme catalyses tRNA(Arg) + L-arginine + ATP = L-arginyl-tRNA(Arg) + AMP + diphosphate. This is Arginine--tRNA ligase from Escherichia fergusonii (strain ATCC 35469 / DSM 13698 / CCUG 18766 / IAM 14443 / JCM 21226 / LMG 7866 / NBRC 102419 / NCTC 12128 / CDC 0568-73).